Reading from the N-terminus, the 245-residue chain is Complement C1q subcomponent subunit A (245 aa).

A signal peptide spans 1 to 22 (METSQGWLVACVLAVTLVWTVA). In terms of domain architecture, Collagen-like spans 31–109 (GKDGVAGIPG…KGVKGNPGNI (79 aa)). Residues 35–111 (VAGIPGRPGR…VKGNPGNIRD (77 aa)) form a disordered region. 4-hydroxyproline occurs at positions 39 and 45. Lysine 48 carries the post-translational modification 5-hydroxylysine. The O-linked (Gal...) hydroxylysine glycan is linked to lysine 48. Proline 54 is modified (4-hydroxyproline). Lysine 67 carries the post-translational modification 5-hydroxylysine. O-linked (Gal...) hydroxylysine glycosylation occurs at lysine 67. Residues proline 79 and proline 85 each carry the 4-hydroxyproline modification. Lysine 100 carries the 5-hydroxylysine modification. Lysine 100 is a glycosylation site (O-linked (Gal...) hydroxylysine). One can recognise a C1q domain in the interval 110 to 245 (RDQPRPAFSA…FSGFLIFPSA (136 aa)). Asparagine 146 carries an N-linked (GlcNAc...) asparagine glycan. Residues cysteine 172 and cysteine 190 are joined by a disulfide bond. Glutamine 199 contacts Ca(2+).

Core component of the complement C1 complex, a calcium-dependent complex composed of 1 molecule of the C1Q subcomplex, 2 molecules of C1R and 2 molecules of C1S. The C1Q subcomplex is composed 18 subunits: 3 chains of C1QA, C1QB, and C1QC trimerize to form 6 collagen-like triple helices connected to six globular ligand-recognition modules (C1q domain). Interacts with CR1 (via Sushi 24 and Sushi 25 domains). Interacts (via C-terminus) with CD33; this interaction activates CD33 inhibitory motifs. In terms of processing, O-linked glycans are assumed to be the Glc-Gal disaccharides typically found as secondary modifications of hydroxylated lysines in collagen-like domains.

The protein resides in the secreted. It localises to the cell surface. The C1Q subcomplex is inhibited by sulfated molecules, such as triterpenoid sulfates, heparan sulfate, or chondroitin sulfates. Its function is as follows. Core component of the complement C1 complex, a multiprotein complex that initiates the classical pathway of the complement system, a cascade of proteins that leads to phagocytosis and breakdown of pathogens and signaling that strengthens the adaptive immune system. The classical complement pathway is initiated by the C1Q subcomplex of the C1 complex, which specifically binds IgG or IgM immunoglobulins complexed with antigens, forming antigen-antibody complexes on the surface of pathogens: C1QA, together with C1QB and C1QC, specifically recognizes and binds the Fc regions of IgG or IgM via its C1q domain. Immunoglobulin-binding activates the proenzyme C1R, which cleaves C1S, initiating the proteolytic cascade of the complement system. The C1Q subcomplex is activated by a hexamer of IgG complexed with antigens, while it is activated by a pentameric IgM. The C1Q subcomplex also recognizes and binds phosphatidylserine exposed on the surface of cells undergoing programmed cell death, possibly promoting activation of the complement system. The polypeptide is Complement C1q subcomponent subunit A (Rattus norvegicus (Rat)).